Consider the following 193-residue polypeptide: MTALTQPVRLPFVTTDLDVLLRQVAERDVDAFAALYDRTRSRVYGMVTRVLRDPGYSEETTQDIYLQVWRSAGSYDPKAGSPMAWLLTLAHRRAVDRVRSEEAASQRESRYGAASVDPPVDHVADSVILLDERRRVVDCMGSLSDLQREAIQLAYYEGLTYVQVSERLSANLATIKSRMRDGIRGLKNCLGMS.

Residues 35–101 (LYDRTRSRVY…RRAVDRVRSE (67 aa)) form a sigma-70 factor domain-2 region. The Polymerase core binding motif lies at 59–62 (ETTQ). A sigma-70 factor domain-4 region spans residues 140 to 187 (MGSLSDLQREAIQLAYYEGLTYVQVSERLSANLATIKSRMRDGIRGLK). A DNA-binding region (H-T-H motif) is located at residues 161–180 (YVQVSERLSANLATIKSRMR).

It belongs to the sigma-70 factor family. ECF subfamily. As to quaternary structure, interacts transiently with the RNA polymerase catalytic core formed by RpoA, RpoB, RpoC and RpoZ (2 alpha, 1 beta, 1 beta' and 1 omega subunit) to form the RNA polymerase holoenzyme that can initiate transcription. Interacts (via sigma-70 factor domain 4) with anti-sigma-K factor RskA.

Functionally, sigma factors are initiation factors that promote the attachment of RNA polymerase to specific initiation sites and are then released. Extracytoplasmic function (ECF) sigma factors are held in an inactive form by an anti-sigma factor until released by regulated intramembrane proteolysis. This chain is ECF RNA polymerase sigma factor SigK (sigK), found in Mycobacterium sp. (strain JLS).